The chain runs to 284 residues: RNase adapter protein RapZ (284 aa).

An ATP-binding site is contributed by 8 to 15 (GRSGSGKS). 56-59 (DVRN) contributes to the GTP binding site. Residues 266 to 284 (RSRGKNVQSRHRTLEKRKQ) are RNA-binding.

The protein belongs to the RapZ-like family. RapZ subfamily. In terms of assembly, homotrimer.

Modulates the synthesis of GlmS, by affecting the processing and stability of the regulatory small RNA GlmZ. When glucosamine-6-phosphate (GlcN6P) concentrations are high in the cell, RapZ binds GlmZ and targets it to cleavage by RNase E. Consequently, GlmZ is inactivated and unable to activate GlmS synthesis. Under low GlcN6P concentrations, RapZ is sequestered and inactivated by an other regulatory small RNA, GlmY, preventing GlmZ degradation and leading to synthesis of GlmS. In Serratia proteamaculans (strain 568), this protein is RNase adapter protein RapZ.